The sequence spans 121 residues: Autophagy-related protein 8f (121 aa).

Residue Gly117 is the site of Phosphatidylethanolamine amidated glycine attachment. Residues 118–121 constitute a propeptide, removed in mature form; that stretch reads FGSP.

It belongs to the ATG8 family. In terms of assembly, interacts with ATG4. Interacts with NBR1. Interacts with ATI1 and ATI2. Interacts with SH3P2. The C-terminal 4 residues are removed by ATG4 to expose Gly-117 at the C-terminus. This Gly-117 forms then a thioester bond with the 'Cys-558' of ATG7 (E1-like activating enzyme) before being transferred to the 'Cys-258' of ATG3 (the specific E2 conjugating enzyme), in order to be finally amidated with phosphatidylethanolamine. This lipid modification anchors ATG8 to autophagosomes. In terms of tissue distribution, constitutively expressed.

Its subcellular location is the cytoplasmic vesicle. The protein localises to the autophagosome membrane. It localises to the vacuole membrane. It is found in the cytoplasm. The protein resides in the cytoskeleton. Its function is as follows. Ubiquitin-like modifier involved in autophagosomes formation. May mediate the delivery of the autophagosomes to the vacuole via the microtubule cytoskeleton. The sequence is that of Autophagy-related protein 8f (ATG8F) from Arabidopsis thaliana (Mouse-ear cress).